The following is a 77-amino-acid chain: AKSVHHARVLIRQRHIRVGRQVVNVPSFMVRLDSQKHIDFSLISPFGGGRPGRVKRKNQKAAAKKASGGDGDEEDEE.

The interval 45–77 (PFGGGRPGRVKRKNQKAAAKKASGGDGDEEDEE) is disordered. The segment covering 52 to 63 (GRVKRKNQKAAA) has biased composition (basic residues).

It belongs to the universal ribosomal protein uS4 family.

The chain is Small ribosomal subunit protein uS4 (RPS9) from Nicotiana tabacum (Common tobacco).